Here is a 374-residue protein sequence, read N- to C-terminus: Acetylxylan esterase (374 aa).

Positions 1–22 (MVFSPRLSAFVALVALTNAATA) are cleaved as a signal peptide. The CBM1 domain maps to 23–57 (VPMYGQCGGSGYTGPTQCDPGLVCVKLNDWYSQCQ). Residues 58–99 (SGGAQPPVTTTSSPPVTVSPPPSTTTVAPPVATGPPAPEIPA) are ser/Thr/Pro-rich linker. A disordered region spans residues 60–86 (GAQPPVTTTSSPPVTVSPPPSTTTVAP). Over residues 63–73 (PPVTTTSSPPV) the composition is skewed to low complexity. The tract at residues 100–374 (GQLTQLRSFG…EVVAMDFFGL (275 aa)) is catalytic. Residue Asn114 is glycosylated (N-linked (GlcNAc...) asparagine). Ser219 serves as the catalytic Charge relay system. A glycan (N-linked (GlcNAc...) asparagine) is linked at Asn320.

It belongs to the carbohydrate esterase 1 (CE1) family. AxeA subfamily. As to quaternary structure, monomer. Post-translationally, glycosylated.

Its subcellular location is the secreted. The catalysed reaction is Deacetylation of xylans and xylo-oligosaccharides.. The protein operates within glycan degradation; xylan degradation. Functionally, acetylxylan esterase involved in the hydrolysis of xylan, a major structural heterogeneous polysaccharide found in plant biomass representing the second most abundant polysaccharide in the biosphere, after cellulose. Degrades acetylated xylans by cleaving acetyl side groups from the hetero-xylan backbone. The protein is Acetylxylan esterase of Coprinopsis cinerea (strain Okayama-7 / 130 / ATCC MYA-4618 / FGSC 9003) (Inky cap fungus).